Reading from the N-terminus, the 242-residue chain is tRNA pseudouridine synthase A (242 aa).

The active-site Nucleophile is D51. Residue Y107 coordinates substrate.

This sequence belongs to the tRNA pseudouridine synthase TruA family. In terms of assembly, homodimer.

The catalysed reaction is uridine(38/39/40) in tRNA = pseudouridine(38/39/40) in tRNA. In terms of biological role, formation of pseudouridine at positions 38, 39 and 40 in the anticodon stem and loop of transfer RNAs. The polypeptide is tRNA pseudouridine synthase A (Helicobacter acinonychis (strain Sheeba)).